Here is a 361-residue protein sequence, read N- to C-terminus: Histidinol-phosphate aminotransferase (361 aa).

Lysine 219 carries the post-translational modification N6-(pyridoxal phosphate)lysine.

This sequence belongs to the class-II pyridoxal-phosphate-dependent aminotransferase family. Histidinol-phosphate aminotransferase subfamily. Homodimer. Requires pyridoxal 5'-phosphate as cofactor.

It carries out the reaction L-histidinol phosphate + 2-oxoglutarate = 3-(imidazol-4-yl)-2-oxopropyl phosphate + L-glutamate. Its pathway is amino-acid biosynthesis; L-histidine biosynthesis; L-histidine from 5-phospho-alpha-D-ribose 1-diphosphate: step 7/9. In Cereibacter sphaeroides (strain ATCC 17029 / ATH 2.4.9) (Rhodobacter sphaeroides), this protein is Histidinol-phosphate aminotransferase.